The following is a 349-amino-acid chain: Early nodulin-like protein 2 (349 aa).

Residues 1–28 form the signal peptide; that stretch reads MTFLKMKSLSFFFTILLSLSTLFTISNA. A Phytocyanin domain is found at 29-130; that stretch reads RKFNVGGSGA…GQKLNVVVIS (102 aa). Cys-84 and Cys-118 are oxidised to a cystine. The segment at 136 to 330 is disordered; it reads TAQSPHAAAP…GQKKSSANGM (195 aa). 2 stretches are compositionally biased toward low complexity: residues 145-201 and 224-234; these read PGSS…SPPG and TSPVSPSSAPM. Polar residues predominate over residues 249–260; sequence IPPSSAPMTSPP. Over residues 263–312 the composition is skewed to low complexity; the sequence is MAPKSSSPVSNSPTVSPSLAPGGSTSSSPSDSPSGSAMGPSGDGPSAAGD. A lipid anchor (GPI-anchor amidated serine) is attached at Ser-325. Positions 326 to 349 are cleaved as a propeptide — removed in mature form; sequence SANGMTVMSITTVLSLVLTIFLSA.

Belongs to the early nodulin-like (ENODL) family. As to expression, mostly expressed in leaves and roots, and, to a lower extent, in seedlings, stems and flowers, but barely in seeds.

It localises to the cell membrane. Its function is as follows. May act as a carbohydrate transporter. The chain is Early nodulin-like protein 2 from Arabidopsis thaliana (Mouse-ear cress).